Here is a 641-residue protein sequence, read N- to C-terminus: Homeobox protein ceh-38 (641 aa).

Composition is skewed to polar residues over residues 1–14 (MESS…TNGT) and 28–38 (DPSSTFINNTG). Disordered regions lie at residues 1 to 79 (MESS…TSSA) and 129 to 244 (LHVD…GDRM). Over residues 52-79 (TISPHPITPSASTSSATSATEEPATSSA) the composition is skewed to low complexity. Residues 131-140 (VDSRRRESHD) are compositionally biased toward basic and acidic residues. Composition is skewed to polar residues over residues 167-183 (TPTN…SSLL) and 190-204 (NTIG…TFGS). Positions 308–394 (NAEIGDDIYI…TRLAILDMKT (87 aa)) form a DNA-binding region, CUT. Disordered stretches follow at residues 398–428 (NRAS…PVSK), 485–508 (GGNI…VGDT), and 552–641 (FGVS…LAAN). A DNA-binding region (homeobox) is located at residues 427 to 486 (SKRPRLVFTDIQKRTLQAIFKETQRPSREMQQTIAEHLRLDLSTVANFFMNARRRSRLGG). Positions 571-604 (HEDDEELDELNDSELAYEEDVEIGDEEEEDEEQA) are enriched in acidic residues. The span at 613–626 (KVEELEEKTVIKEE) shows a compositional bias: basic and acidic residues.

Belongs to the CUT homeobox family. As to expression, expressed in the embryo. After gastrulation, expressed in almost all cells. During larval and adult stages, expressed in the dorsal and ventral nerve cord, head and tail neurons, pharynx, gut and head.

It is found in the nucleus. Its function is as follows. Probable DNA-binding regulatory protein involved in cell-fate specification. The protein is Homeobox protein ceh-38 (ceh-38) of Caenorhabditis elegans.